Reading from the N-terminus, the 209-residue chain is CASP-like protein 1A1 (209 aa).

A disordered region spans residues 1 to 26 (MEEAKHNEAEEAQGIEAREAKQIEAG). The Cytoplasmic portion of the chain corresponds to 1–49 (MEEAKHNEAEEAQGIEAREAKQIEAGETSRSSRKLITFEPKLVINKGIS). A helical membrane pass occupies residues 50 to 70 (VLGFVLRLFAVFGTIGSALAM). Residues 71 to 95 (GTTHESVVSLSQLVLLKVKYSDLPT) are Extracellular-facing. A helical transmembrane segment spans residues 96–116 (LMFFVVANAISGGYLVLSLPV). At 117–130 (SIFHIFSTQAKTSR) the chain is on the cytoplasmic side. Residues 131–151 (IILLVVDTVMLALVSSGASAA) form a helical membrane-spanning segment. The Extracellular segment spans residues 152 to 183 (TATVYLAHEGNTTANWPPICQQFDGFCERISG). Asn162 is a glycosylation site (N-linked (GlcNAc...) asparagine). A helical membrane pass occupies residues 184 to 204 (SLIGSFCAVILLMLIVINSAI). Residues 205–209 (SLSRH) are Cytoplasmic-facing.

The protein belongs to the Casparian strip membrane proteins (CASP) family. Homodimer and heterodimers. Expressed in the root endodermis.

The protein resides in the cell membrane. This chain is CASP-like protein 1A1, found in Arabidopsis thaliana (Mouse-ear cress).